Consider the following 1059-residue polypeptide: Carbamoyl phosphate synthase large chain (1059 aa).

The carboxyphosphate synthetic domain stretch occupies residues 1–401 (MPKRKDIQKV…AMLKAVRSLE (401 aa)). ATP is bound by residues R129, R169, G175, G176, R208, I210, E215, G241, V242, H243, Q284, and E298. Residues 133-327 (KALMERLNEP…IAKMAAKIAV (195 aa)) form the ATP-grasp 1 domain. Q284, E298, and N300 together coordinate Mg(2+). Q284, E298, and N300 together coordinate Mn(2+). The tract at residues 402 to 546 (IGVTGLNDLT…YATYERENES (145 aa)) is oligomerization domain. Positions 547 to 929 (VRSKKPSVIV…ALYKAFVASN (383 aa)) are carbamoyl phosphate synthetic domain. Residues 671–861 (DQVIKTLALP…LAQLATRVML (191 aa)) enclose the ATP-grasp 2 domain. 10 residues coordinate ATP: R707, S746, L748, E752, G777, V778, H779, S780, Q820, and E832. The Mg(2+) site is built by Q820, E832, and N834. The Mn(2+) site is built by Q820, E832, and N834. Residues 930–1059 (IKVPQYGNVL…SRSFTVNEMK (130 aa)) form the MGS-like domain. The tract at residues 930–1059 (IKVPQYGNVL…SRSFTVNEMK (130 aa)) is allosteric domain.

This sequence belongs to the CarB family. Composed of two chains; the small (or glutamine) chain promotes the hydrolysis of glutamine to ammonia, which is used by the large (or ammonia) chain to synthesize carbamoyl phosphate. Tetramer of heterodimers (alpha,beta)4. The cofactor is Mg(2+). Mn(2+) is required as a cofactor.

The catalysed reaction is hydrogencarbonate + L-glutamine + 2 ATP + H2O = carbamoyl phosphate + L-glutamate + 2 ADP + phosphate + 2 H(+). It carries out the reaction hydrogencarbonate + NH4(+) + 2 ATP = carbamoyl phosphate + 2 ADP + phosphate + 2 H(+). The protein operates within amino-acid biosynthesis; L-arginine biosynthesis; carbamoyl phosphate from bicarbonate: step 1/1. It functions in the pathway pyrimidine metabolism; UMP biosynthesis via de novo pathway; (S)-dihydroorotate from bicarbonate: step 1/3. Its function is as follows. Large subunit of the glutamine-dependent carbamoyl phosphate synthetase (CPSase). CPSase catalyzes the formation of carbamoyl phosphate from the ammonia moiety of glutamine, carbonate, and phosphate donated by ATP, constituting the first step of 2 biosynthetic pathways, one leading to arginine and/or urea and the other to pyrimidine nucleotides. The large subunit (synthetase) binds the substrates ammonia (free or transferred from glutamine from the small subunit), hydrogencarbonate and ATP and carries out an ATP-coupled ligase reaction, activating hydrogencarbonate by forming carboxy phosphate which reacts with ammonia to form carbamoyl phosphate. The protein is Carbamoyl phosphate synthase large chain of Leuconostoc citreum (strain KM20).